Consider the following 1390-residue polypeptide: DNA-directed RNA polymerase III subunit RPC1 (1390 aa).

Residues Cys69, Cys72, Cys79, His82, Cys109, and Cys112 each contribute to the Zn(2+) site. Position 144 (Lys144) interacts with DNA. Zn(2+) is bound by residues Cys156 and Cys159. Residues Lys167, Ser326, Lys348, Arg353, Arg360, and Arg366 each coordinate DNA. Lys445 carries the post-translational modification N6-acetyllysine. Arg464 contacts RNA. Asp499, Asp501, and Asp503 together coordinate Mg(2+). Asp503 serves as a coordination point for RNA. The tract at residues 843-884 is bridging helix; it reads TPTEFFFHTMAGREGLVDTAVKTAETGYMQRRLVKSLEDLCS. Positions 1029–1070 are trigger loop; the sequence is PGSAVGALCAQSIGEPGTQMTLKTFHFAGVASMNITLGVPRI. Positions 1159, 1305, and 1323 each coordinate DNA.

Belongs to the RNA polymerase beta' chain family. As to quaternary structure, component of the RNA polymerase III (Pol III) (Pol III) complex consisting of 17 subunits: a ten-subunit catalytic core composed of POLR3A/RPC1, POLR3B/RPC2, POLR1C/RPAC1, POLR1D/RPAC2, POLR3K/RPC10, POLR2E/RPABC1, POLR2F/RPABC2, POLR2H/RPABC3, POLR2K/RPABC4 and POLR2L/RPABC5; a mobile stalk composed of two subunits POLR3H/RPC8 and CRCP/RPC9, protruding from the core and functioning primarily in transcription initiation; and additional subunits homologous to general transcription factors of the RNA polymerase II machinery, POLR3C/RPC3-POLR3F/RPC6-POLR3G/RPC7 heterotrimer required for transcription initiation and POLR3D/RPC4-POLR3E/RPC5 heterodimer involved in both transcription initiation and termination. Pol III exists as two alternative complexes defined by the mutually exclusive incorporation of subunit POLR3G/RPC7alpha or POLR3GL/RPC7beta. The presence of POLR3G/RPC7alpha or POLR3GL/RPC7beta differentially modulates the transcription potential of Pol III, with POLR3G/RPC7alpha specifically associated with transcription of snaR-A non-coding RNAs. As part of the RNA polymerase III complex, interacts with PKP2. Mg(2+) serves as cofactor. Expressed in the brain, in the cortex and the white matter (at protein level).

The protein localises to the nucleus. The protein resides in the cytoplasm. Its subcellular location is the cytosol. It catalyses the reaction RNA(n) + a ribonucleoside 5'-triphosphate = RNA(n+1) + diphosphate. Functionally, catalytic core component of RNA polymerase III (Pol III), a DNA-dependent RNA polymerase which synthesizes small non-coding RNAs using the four ribonucleoside triphosphates as substrates. Synthesizes 5S rRNA, snRNAs, tRNAs and miRNAs from at least 500 distinct genomic loci. Pol III-mediated transcription cycle proceeds through transcription initiation, transcription elongation and transcription termination stages. During transcription initiation, Pol III is recruited to DNA promoters type I, II or III with the help of general transcription factors and other specific initiation factors. Once the polymerase has escaped from the promoter it enters the elongation phase during which RNA is actively polymerized, based on complementarity with the template DNA strand. Transcription termination involves the release of the RNA transcript and polymerase from the DNA. Forms Pol III active center together with the second largest subunit POLR3B/RPC2. Appends one nucleotide at a time to the 3' end of the nascent RNA, with POLR3A/RPC1 contributing a Mg(2+)-coordinating DxDGD motif, and POLR3B/RPC2 participating in the coordination of a second Mg(2+) ion and providing lysine residues believed to facilitate Watson-Crick base pairing between the incoming nucleotide and template base. Typically, Mg(2+) ions direct a 5' nucleoside triphosphate to form a phosphodiester bond with the 3' hydroxyl of the preceding nucleotide of the nascent RNA, with the elimination of pyrophosphate. Pol III plays a key role in sensing and limiting infection by intracellular bacteria and DNA viruses. Acts as a nuclear and cytosolic DNA sensor involved in innate immune response. Can sense non-self dsDNA that serves as template for transcription into dsRNA. The non-self RNA polymerase III transcripts, such as Epstein-Barr virus-encoded RNAs (EBERs) induce type I interferon and NF-kappa-B through the RIG-I pathway. The protein is DNA-directed RNA polymerase III subunit RPC1 of Homo sapiens (Human).